A 150-amino-acid chain; its full sequence is Small ribosomal subunit protein bS6 (150 aa).

A disordered region spans residues 99–150 (GPSAMLQKRDRDDRGERGERGFGGGGFGGGRDREDRPRRGRDREEAATEETF). 2 stretches are compositionally biased toward basic and acidic residues: residues 105–118 (QKRDRDDRGERGER) and 128–144 (GRDREDRPRRGRDREEA).

This sequence belongs to the bacterial ribosomal protein bS6 family.

Functionally, binds together with bS18 to 16S ribosomal RNA. This is Small ribosomal subunit protein bS6 from Azorhizobium caulinodans (strain ATCC 43989 / DSM 5975 / JCM 20966 / LMG 6465 / NBRC 14845 / NCIMB 13405 / ORS 571).